A 505-amino-acid polypeptide reads, in one-letter code: Glycerol kinase 2 (505 aa).

T17 contacts ADP. Positions 17, 18, and 19 each coordinate ATP. Position 17 (T17) interacts with sn-glycerol 3-phosphate. R21 serves as a coordination point for ADP. The sn-glycerol 3-phosphate site is built by R87, E88, Y139, and D249. The glycerol site is built by R87, E88, Y139, D249, and Q250. ADP contacts are provided by T271 and G314. T271, G314, Q318, and G415 together coordinate ATP. ADP contacts are provided by G415 and N419.

This sequence belongs to the FGGY kinase family.

It catalyses the reaction glycerol + ATP = sn-glycerol 3-phosphate + ADP + H(+). Its pathway is polyol metabolism; glycerol degradation via glycerol kinase pathway; sn-glycerol 3-phosphate from glycerol: step 1/1. Its activity is regulated as follows. Inhibited by fructose 1,6-bisphosphate (FBP). Functionally, key enzyme in the regulation of glycerol uptake and metabolism. Catalyzes the phosphorylation of glycerol to yield sn-glycerol 3-phosphate. The protein is Glycerol kinase 2 of Pseudomonas aeruginosa (strain ATCC 15692 / DSM 22644 / CIP 104116 / JCM 14847 / LMG 12228 / 1C / PRS 101 / PAO1).